The following is a 280-amino-acid chain: Protein IMPACT homolog (280 aa).

The RWD domain occupies 9-109; that stretch reads DELLALESIY…QAAAERESKL (101 aa).

Belongs to the IMPACT family. As to quaternary structure, interacts (via N-terminus) with gcn1 (via C-terminus); this interaction reduces the gcn1-gcn20 complex formation and prevents the interaction of gcn1 with gcn2 protein kinase and gcn2 activation in amino acid-starved cells. Interacts (via C-terminus) with act1; this interaction occurs in a gcn1-independent manner. Interacts with rpl39; this interaction occurs in a gcn1-independent manner. Associates (via middle region) with ribosomes; this association occurs in a gcn1-independent manner and persists under amino acid starvation conditions.

Its subcellular location is the cytoplasm. It is found in the nucleus. Its function is as follows. Translational regulator that ensures constant high levels of translation under amino acid starvation. Plays a role as a negative regulator of the gcn2 kinase activity; impairs gcn1-mediated gcn2 activation, and hence gcn2-mediated eIF-2-alpha phosphorylation in amino acid-starved cells and subsequent down-regulation of protein synthesis. In normal conditions, it resides in a actin complex and has no activity. The polypeptide is Protein IMPACT homolog (yih1) (Schizosaccharomyces pombe (strain 972 / ATCC 24843) (Fission yeast)).